A 260-amino-acid polypeptide reads, in one-letter code: Small ribosomal subunit protein uS2 (260 aa).

The protein belongs to the universal ribosomal protein uS2 family.

This chain is Small ribosomal subunit protein uS2, found in Staphylococcus carnosus (strain TM300).